The sequence spans 749 residues: Catalase-peroxidase 2 (749 aa).

The signal sequence occupies residues 1–27; sequence MFKRTIPLFAAFTLAISPSIFPNYAHA. Residues 107 to 229 constitute a cross-link (tryptophyl-tyrosyl-methioninium (Trp-Tyr) (with M-255)); that stretch reads WHAAGTYRIY…LAATVMGLIY (123 aa). The active-site Proton acceptor is His-108. The segment at residues 229 to 255 is a cross-link (tryptophyl-tyrosyl-methioninium (Tyr-Met) (with W-107)); that stretch reads YVNPEGPNGVPDPLAAAEKIRETFGRM. Position 270 (His-270) interacts with heme b.

Belongs to the peroxidase family. Peroxidase/catalase subfamily. In terms of assembly, homodimer or homotetramer. Requires heme b as cofactor. In terms of processing, formation of the three residue Trp-Tyr-Met cross-link is important for the catalase, but not the peroxidase activity of the enzyme.

The enzyme catalyses H2O2 + AH2 = A + 2 H2O. The catalysed reaction is 2 H2O2 = O2 + 2 H2O. Bifunctional enzyme with both catalase and broad-spectrum peroxidase activity. This chain is Catalase-peroxidase 2, found in Legionella pneumophila (strain Lens).